The following is a 322-amino-acid chain: HPr kinase/phosphorylase (322 aa).

Active-site residues include histidine 146 and lysine 167. 161–168 (GDSGLGKS) contributes to the ATP binding site. A Mg(2+)-binding site is contributed by serine 168. Aspartate 185 serves as the catalytic Proton acceptor; for phosphorylation activity. Proton donor; for dephosphorylation activity. Residues 209–218 (LEVRGLGLLD) form an important for the catalytic mechanism of both phosphorylation and dephosphorylation region. Glutamate 210 provides a ligand contact to Mg(2+). Residue arginine 250 is part of the active site. The interval 271-276 (QVAAGR) is important for the catalytic mechanism of dephosphorylation.

This sequence belongs to the HPrK/P family. In terms of assembly, homohexamer. It depends on Mg(2+) as a cofactor.

It catalyses the reaction [HPr protein]-L-serine + ATP = [HPr protein]-O-phospho-L-serine + ADP + H(+). The catalysed reaction is [HPr protein]-O-phospho-L-serine + phosphate + H(+) = [HPr protein]-L-serine + diphosphate. In terms of biological role, catalyzes the ATP- as well as the pyrophosphate-dependent phosphorylation of a specific serine residue in HPr, a phosphocarrier protein of the phosphoenolpyruvate-dependent sugar phosphotransferase system (PTS). HprK/P also catalyzes the pyrophosphate-producing, inorganic phosphate-dependent dephosphorylation (phosphorolysis) of seryl-phosphorylated HPr (P-Ser-HPr). The chain is HPr kinase/phosphorylase from Paraburkholderia phytofirmans (strain DSM 17436 / LMG 22146 / PsJN) (Burkholderia phytofirmans).